The primary structure comprises 192 residues: Transposon Tn552 DNA-invertase BinR (192 aa).

In terms of domain architecture, Resolvase/invertase-type recombinase catalytic spans 1–136 (MKIGYARVST…AGRIAARARG (136 aa)). Ser-9 functions as the O-(5'-phospho-DNA)-serine intermediate in the catalytic mechanism. A DNA-binding region (H-T-H motif) is located at residues 163–182 (IKTIAEQWKVSRTTIYRYLN).

It belongs to the site-specific recombinase resolvase family.

In terms of biological role, DNA-invertase, mediating the inversion of inv. This chain is Transposon Tn552 DNA-invertase BinR (resR), found in Staphylococcus aureus.